The primary structure comprises 168 residues: NADH-quinone oxidoreductase subunit I (168 aa).

4Fe-4S ferredoxin-type domains are found at residues 58-88 and 99-128; these read LRTY…IEAQ and VRYD…EGPN. [4Fe-4S] cluster contacts are provided by cysteine 68, cysteine 71, cysteine 74, cysteine 78, cysteine 108, cysteine 111, cysteine 114, and cysteine 118.

The protein belongs to the complex I 23 kDa subunit family. NDH-1 is composed of 14 different subunits. Subunits NuoA, H, J, K, L, M, N constitute the membrane sector of the complex. [4Fe-4S] cluster is required as a cofactor.

The protein localises to the cell inner membrane. The catalysed reaction is a quinone + NADH + 5 H(+)(in) = a quinol + NAD(+) + 4 H(+)(out). NDH-1 shuttles electrons from NADH, via FMN and iron-sulfur (Fe-S) centers, to quinones in the respiratory chain. The immediate electron acceptor for the enzyme in this species is believed to be ubiquinone. Couples the redox reaction to proton translocation (for every two electrons transferred, four hydrogen ions are translocated across the cytoplasmic membrane), and thus conserves the redox energy in a proton gradient. The chain is NADH-quinone oxidoreductase subunit I from Ehrlichia ruminantium (strain Gardel).